The following is a 349-amino-acid chain: Methylthioribose-1-phosphate isomerase (349 aa).

Substrate contacts are provided by residues 49–51, Arg-93, and Gln-201; that span reads RGA. Asp-242 (proton donor) is an active-site residue. 252-253 serves as a coordination point for substrate; the sequence is NK.

The protein belongs to the EIF-2B alpha/beta/delta subunits family. MtnA subfamily.

The enzyme catalyses 5-(methylsulfanyl)-alpha-D-ribose 1-phosphate = 5-(methylsulfanyl)-D-ribulose 1-phosphate. It functions in the pathway amino-acid biosynthesis; L-methionine biosynthesis via salvage pathway; L-methionine from S-methyl-5-thio-alpha-D-ribose 1-phosphate: step 1/6. Catalyzes the interconversion of methylthioribose-1-phosphate (MTR-1-P) into methylthioribulose-1-phosphate (MTRu-1-P). The protein is Methylthioribose-1-phosphate isomerase of Petrotoga mobilis (strain DSM 10674 / SJ95).